A 253-amino-acid polypeptide reads, in one-letter code: Phosphate import ATP-binding protein PstB (253 aa).

An ABC transporter domain is found at 7 to 248 (IKVRDLNLYY…PRDRRTEDYI (242 aa)). ATP is bound at residue 39 to 46 (GPSGCGKS).

It belongs to the ABC transporter superfamily. Phosphate importer (TC 3.A.1.7) family. In terms of assembly, the complex is composed of two ATP-binding proteins (PstB), two transmembrane proteins (PstC and PstA) and a solute-binding protein (PstS).

The protein localises to the cell membrane. The enzyme catalyses phosphate(out) + ATP + H2O = ADP + 2 phosphate(in) + H(+). Part of the ABC transporter complex PstSACB involved in phosphate import. Responsible for energy coupling to the transport system. This is Phosphate import ATP-binding protein PstB from Carboxydothermus hydrogenoformans (strain ATCC BAA-161 / DSM 6008 / Z-2901).